The following is a 396-amino-acid chain: Obg-like ATPase 1 (396 aa).

The 261-residue stretch at 23–283 (LKIGIVGLPN…LSAEERQKYL (261 aa)) folds into the OBG-type G domain. 32–37 (NVGKST) contributes to the ATP binding site. Mg(2+) is bound by residues Ser-36 and Thr-56. Position 231 (Leu-231) interacts with ATP. The Nuclear export signal signature appears at 267–274 (LELRLQEL). Lys-294 carries the N6-acetyllysine modification. Positions 304–387 (QLEYFFTAGP…EDGDIIFFKF (84 aa)) constitute a TGS domain.

Belongs to the TRAFAC class OBG-HflX-like GTPase superfamily. OBG GTPase family. YchF/OLA1 subfamily. In terms of assembly, monomer. Requires Mg(2+) as cofactor.

The protein resides in the cytoplasm. The protein localises to the nucleus. Its subcellular location is the nucleolus. Hydrolyzes ATP, and can also hydrolyze GTP with lower efficiency. Has lower affinity for GTP. The protein is Obg-like ATPase 1 of Bos taurus (Bovine).